The following is a 444-amino-acid chain: Phosphoglucosamine mutase (444 aa).

Ser-102 acts as the Phosphoserine intermediate in catalysis. Mg(2+) is bound by residues Ser-102, Asp-241, Asp-243, and Asp-245. Residue Ser-102 is modified to Phosphoserine.

The protein belongs to the phosphohexose mutase family. Requires Mg(2+) as cofactor. Activated by phosphorylation.

It carries out the reaction alpha-D-glucosamine 1-phosphate = D-glucosamine 6-phosphate. In terms of biological role, catalyzes the conversion of glucosamine-6-phosphate to glucosamine-1-phosphate. This Acidovorax ebreus (strain TPSY) (Diaphorobacter sp. (strain TPSY)) protein is Phosphoglucosamine mutase.